The chain runs to 117 residues: Large ribosomal subunit protein bL19 (117 aa).

Belongs to the bacterial ribosomal protein bL19 family.

Functionally, this protein is located at the 30S-50S ribosomal subunit interface and may play a role in the structure and function of the aminoacyl-tRNA binding site. The protein is Large ribosomal subunit protein bL19 of Azobacteroides pseudotrichonymphae genomovar. CFP2.